A 285-amino-acid polypeptide reads, in one-letter code: MRLIIVSGRSGSGKSTALNVLEDNGFYCIDNLPAGLLPELAERALIHTELAQPLVAVSIDARNLPSHLERFPQLLEEVRAKHIHCDVLYLDADEETLLKRFSETRRRHPLSSPHRSLAEAIEDETKLLGPIIDLADLKINTTSLNLYQLRDAIKLRLLNQPEPGTAFLVESFGFKRGMPVDADLVFDVRCLPNPYWKPELRDQSGLDQPVADYLAAQPDVEEMFQDISSYLLKWLPRFAASNRAYVTIAIGCTGGHHRSVYLTERLGQVLQKTLKNVQVRHRDLS.

8-15 (GRSGSGKS) provides a ligand contact to ATP. 60–63 (DARN) is a GTP binding site.

Belongs to the RapZ-like family.

Functionally, displays ATPase and GTPase activities. The polypeptide is Nucleotide-binding protein PFLU_0879 (Pseudomonas fluorescens (strain SBW25)).